Reading from the N-terminus, the 344-residue chain is Tetraacyldisaccharide 4'-kinase (344 aa).

Residue 65–72 (HAGGTGKT) participates in ATP binding.

Belongs to the LpxK family.

The enzyme catalyses a lipid A disaccharide + ATP = a lipid IVA + ADP + H(+). It participates in glycolipid biosynthesis; lipid IV(A) biosynthesis; lipid IV(A) from (3R)-3-hydroxytetradecanoyl-[acyl-carrier-protein] and UDP-N-acetyl-alpha-D-glucosamine: step 6/6. Transfers the gamma-phosphate of ATP to the 4'-position of a tetraacyldisaccharide 1-phosphate intermediate (termed DS-1-P) to form tetraacyldisaccharide 1,4'-bis-phosphate (lipid IVA). The sequence is that of Tetraacyldisaccharide 4'-kinase from Neisseria meningitidis serogroup B (strain ATCC BAA-335 / MC58).